We begin with the raw amino-acid sequence, 578 residues long: Proteasome-associated ATPase (578 aa).

Residues 35–84 (RHLTALEEQLGAARTRLAQVSAQNDRLATTLREARDQIVALKAEVDRLGQ) adopt a coiled-coil conformation. 266–271 (GCGKTL) is an ATP binding site. The tract at residues 577–578 (YL) is docks into pockets in the proteasome alpha-ring.

The protein belongs to the AAA ATPase family. Homohexamer. Assembles into a hexameric ring structure that caps the 20S proteasome core. Strongly interacts with the prokaryotic ubiquitin-like protein Pup through a hydrophobic interface; the interacting region of ARC lies in its N-terminal coiled-coil domain. There is one Pup binding site per ARC hexamer ring. Upon ATP-binding, the C-terminus of ARC interacts with the alpha-rings of the proteasome core, possibly by binding to the intersubunit pockets.

It functions in the pathway protein degradation; proteasomal Pup-dependent pathway. Functionally, ATPase which is responsible for recognizing, binding, unfolding and translocation of pupylated proteins into the bacterial 20S proteasome core particle. May be essential for opening the gate of the 20S proteasome via an interaction with its C-terminus, thereby allowing substrate entry and access to the site of proteolysis. Thus, the C-termini of the proteasomal ATPase may function like a 'key in a lock' to induce gate opening and therefore regulate proteolysis. The protein is Proteasome-associated ATPase of Kineococcus radiotolerans (strain ATCC BAA-149 / DSM 14245 / SRS30216).